Reading from the N-terminus, the 449-residue chain is Probable hexaprenyl pyrophosphate synthase, mitochondrial (449 aa).

3 residues coordinate isopentenyl diphosphate: K122, R125, and H200. D207 and D211 together coordinate Mg(2+). Residue R216 coordinates an all-trans-polyprenyl diphosphate. R217 serves as a coordination point for isopentenyl diphosphate. 4 residues coordinate an all-trans-polyprenyl diphosphate: K300, T301, Q338, and K355.

Belongs to the FPP/GGPP synthase family. Mg(2+) is required as a cofactor.

Its subcellular location is the mitochondrion. Its pathway is cofactor biosynthesis; ubiquinone biosynthesis. Its function is as follows. Assembly of polyisoprenoid side chains. The polyprenyl synthase of coenzyme Q biosynthesis catalyzes the formation from isopentenyl diphosphate of all trans-polyprenyl pyrophosphates generally ranging in length of between 6 and 10 isoprene units depending on the species. This Neurospora crassa (strain ATCC 24698 / 74-OR23-1A / CBS 708.71 / DSM 1257 / FGSC 987) protein is Probable hexaprenyl pyrophosphate synthase, mitochondrial.